The primary structure comprises 324 residues: tRNA dimethylallyltransferase (324 aa).

17–24 (GPTASGKT) contributes to the ATP binding site. Residue 19 to 24 (TASGKT) participates in substrate binding. 4 interaction with substrate tRNA regions span residues 42 to 45 (DSAL), 166 to 170 (QRIQR), 251 to 256 (RCVGYR), and 284 to 291 (KRQITWLR).

It belongs to the IPP transferase family. In terms of assembly, monomer. Mg(2+) is required as a cofactor.

It catalyses the reaction adenosine(37) in tRNA + dimethylallyl diphosphate = N(6)-dimethylallyladenosine(37) in tRNA + diphosphate. Catalyzes the transfer of a dimethylallyl group onto the adenine at position 37 in tRNAs that read codons beginning with uridine, leading to the formation of N6-(dimethylallyl)adenosine (i(6)A). The polypeptide is tRNA dimethylallyltransferase (Burkholderia ambifaria (strain MC40-6)).